Consider the following 279-residue polypeptide: Diaminopimelate epimerase (279 aa).

Asn-13 and Asn-66 together coordinate substrate. Cys-75 functions as the Proton donor in the catalytic mechanism. Residues 76-77 (GN), Asn-164, Asn-197, and 215-216 (ER) each bind substrate. The Proton acceptor role is filled by Cys-224. 225 to 226 (GT) contributes to the substrate binding site.

It belongs to the diaminopimelate epimerase family. As to quaternary structure, homodimer.

Its subcellular location is the cytoplasm. The catalysed reaction is (2S,6S)-2,6-diaminopimelate = meso-2,6-diaminopimelate. The protein operates within amino-acid biosynthesis; L-lysine biosynthesis via DAP pathway; DL-2,6-diaminopimelate from LL-2,6-diaminopimelate: step 1/1. Functionally, catalyzes the stereoinversion of LL-2,6-diaminopimelate (L,L-DAP) to meso-diaminopimelate (meso-DAP), a precursor of L-lysine and an essential component of the bacterial peptidoglycan. This is Diaminopimelate epimerase from Brachyspira hyodysenteriae (strain ATCC 49526 / WA1).